Reading from the N-terminus, the 171-residue chain is Secreted protein CSS3 (171 aa).

Residues 1–20 (MVPLFGLFCIFSQLYSLCSA) form the signal peptide. 3 N-linked (GlcNAc...) asparagine glycosylation sites follow: Asn37, Asn139, and Asn159.

Its subcellular location is the cytoplasm. The protein resides in the secreted. The protein is Secreted protein CSS3 of Saccharomyces cerevisiae (strain ATCC 204508 / S288c) (Baker's yeast).